A 188-amino-acid polypeptide reads, in one-letter code: ATP-dependent Clp protease proteolytic subunit 1 (188 aa).

Catalysis depends on Ser-90, which acts as the Nucleophile. His-115 is an active-site residue.

The protein belongs to the peptidase S14 family. In terms of assembly, fourteen ClpP subunits assemble into 2 heptameric rings which stack back to back to give a disk-like structure with a central cavity, resembling the structure of eukaryotic proteasomes.

The protein localises to the cytoplasm. It carries out the reaction Hydrolysis of proteins to small peptides in the presence of ATP and magnesium. alpha-casein is the usual test substrate. In the absence of ATP, only oligopeptides shorter than five residues are hydrolyzed (such as succinyl-Leu-Tyr-|-NHMec, and Leu-Tyr-Leu-|-Tyr-Trp, in which cleavage of the -Tyr-|-Leu- and -Tyr-|-Trp bonds also occurs).. Cleaves peptides in various proteins in a process that requires ATP hydrolysis. Has a chymotrypsin-like activity. Plays a major role in the degradation of misfolded proteins. This Corynebacterium jeikeium (strain K411) protein is ATP-dependent Clp protease proteolytic subunit 1.